We begin with the raw amino-acid sequence, 192 residues long: Protein GrpE (192 aa).

Residues 1 to 34 (MSSKEQKTPNEQVSEEMENTAEQQVEATQETGEC) are disordered. Over residues 20 to 31 (TAEQQVEATQET) the composition is skewed to polar residues.

It belongs to the GrpE family. Homodimer.

It localises to the cytoplasm. Participates actively in the response to hyperosmotic and heat shock by preventing the aggregation of stress-denatured proteins, in association with DnaK and GrpE. It is the nucleotide exchange factor for DnaK and may function as a thermosensor. Unfolded proteins bind initially to DnaJ; upon interaction with the DnaJ-bound protein, DnaK hydrolyzes its bound ATP, resulting in the formation of a stable complex. GrpE releases ADP from DnaK; ATP binding to DnaK triggers the release of the substrate protein, thus completing the reaction cycle. Several rounds of ATP-dependent interactions between DnaJ, DnaK and GrpE are required for fully efficient folding. The chain is Protein GrpE from Yersinia pestis.